The following is a 375-amino-acid chain: tRNA-specific 2-thiouridylase MnmA (375 aa).

ATP contacts are provided by residues G16–S23 and M42. The interaction with target base in tRNA stretch occupies residues N102–D104. The active-site Nucleophile is the C107. A disulfide bridge connects residues C107 and C203. Residue G131 coordinates ATP. An interaction with tRNA region spans residues K153 to Q155. C203 acts as the Cysteine persulfide intermediate in catalysis. Positions R315 to Y316 are interaction with tRNA.

It belongs to the MnmA/TRMU family.

The protein resides in the cytoplasm. It carries out the reaction S-sulfanyl-L-cysteinyl-[protein] + uridine(34) in tRNA + AH2 + ATP = 2-thiouridine(34) in tRNA + L-cysteinyl-[protein] + A + AMP + diphosphate + H(+). Functionally, catalyzes the 2-thiolation of uridine at the wobble position (U34) of tRNA, leading to the formation of s(2)U34. The chain is tRNA-specific 2-thiouridylase MnmA from Pseudomonas aeruginosa (strain UCBPP-PA14).